The primary structure comprises 95 residues: Aspartyl/glutamyl-tRNA(Asn/Gln) amidotransferase subunit C (95 aa).

Belongs to the GatC family. As to quaternary structure, heterotrimer of A, B and C subunits.

The catalysed reaction is L-glutamyl-tRNA(Gln) + L-glutamine + ATP + H2O = L-glutaminyl-tRNA(Gln) + L-glutamate + ADP + phosphate + H(+). It carries out the reaction L-aspartyl-tRNA(Asn) + L-glutamine + ATP + H2O = L-asparaginyl-tRNA(Asn) + L-glutamate + ADP + phosphate + 2 H(+). In terms of biological role, allows the formation of correctly charged Asn-tRNA(Asn) or Gln-tRNA(Gln) through the transamidation of misacylated Asp-tRNA(Asn) or Glu-tRNA(Gln) in organisms which lack either or both of asparaginyl-tRNA or glutaminyl-tRNA synthetases. The reaction takes place in the presence of glutamine and ATP through an activated phospho-Asp-tRNA(Asn) or phospho-Glu-tRNA(Gln). In Chlorobaculum parvum (strain DSM 263 / NCIMB 8327) (Chlorobium vibrioforme subsp. thiosulfatophilum), this protein is Aspartyl/glutamyl-tRNA(Asn/Gln) amidotransferase subunit C.